The following is a 79-amino-acid chain: UPF0180 protein BCAH820_1484 (79 aa).

This sequence belongs to the UPF0180 family.

The protein is UPF0180 protein BCAH820_1484 of Bacillus cereus (strain AH820).